A 595-amino-acid chain; its full sequence is NADH-quinone oxidoreductase subunit C/D (595 aa).

An NADH dehydrogenase I subunit C region spans residues 1–185 (MNKNICLSAS…NPFVLTKEKE (185 aa)). The tract at residues 209 to 595 (DFMFLNFGPN…IDFVMSDVDR (387 aa)) is NADH dehydrogenase I subunit D.

In the N-terminal section; belongs to the complex I 30 kDa subunit family. The protein in the C-terminal section; belongs to the complex I 49 kDa subunit family. In terms of assembly, NDH-1 is composed of 13 different subunits. Subunits NuoB, CD, E, F, and G constitute the peripheral sector of the complex.

Its subcellular location is the cell inner membrane. The enzyme catalyses a quinone + NADH + 5 H(+)(in) = a quinol + NAD(+) + 4 H(+)(out). Functionally, NDH-1 shuttles electrons from NADH, via FMN and iron-sulfur (Fe-S) centers, to quinones in the respiratory chain. The immediate electron acceptor for the enzyme in this species is believed to be ubiquinone. Couples the redox reaction to proton translocation (for every two electrons transferred, four hydrogen ions are translocated across the cytoplasmic membrane), and thus conserves the redox energy in a proton gradient. The chain is NADH-quinone oxidoreductase subunit C/D from Baumannia cicadellinicola subsp. Homalodisca coagulata.